Reading from the N-terminus, the 131-residue chain is Small ribosomal subunit protein bS6 (131 aa).

The disordered stretch occupies residues 98 to 131 (EASPMVKAKDERRERRDDFANETADDAEAGDSEE). Basic and acidic residues predominate over residues 104–116 (KAKDERRERRDDF). Residues 120 to 131 (TADDAEAGDSEE) show a composition bias toward acidic residues.

This sequence belongs to the bacterial ribosomal protein bS6 family.

Binds together with bS18 to 16S ribosomal RNA. The protein is Small ribosomal subunit protein bS6 of Cronobacter sakazakii (strain ATCC BAA-894) (Enterobacter sakazakii).